The following is a 234-amino-acid chain: Thymidine kinase, cytosolic (234 aa).

The residue at position 2 (Ser-2) is an N-acetylserine. Ser-2 and Ser-13 each carry phosphoserine. ATP is bound by residues 26 to 33 (GPMFSGKS), 58 to 60 (DTR), and 97 to 100 (DEGQ). Residue Glu-98 is the Proton acceptor of the active site. Position 128 (Phe-128) interacts with substrate. Zn(2+) contacts are provided by Cys-153 and Cys-156. Residues 172–176 (VEVIG) and Tyr-181 each bind substrate. Zn(2+) is bound by residues Cys-185 and Cys-188. Residues 203–205 (KEN) carry the KEN box motif. Ser-231 carries the post-translational modification Phosphoserine.

The protein belongs to the thymidine kinase family. Homotetramer. Tetramerization from dimerization is induced by ATP and increases catalytic efficiency due to a high affinity for thymidine. Tetramerization is inhibited by phosphorylation at Ser-13. Interacts (via the KEN box) with FZR1. In terms of processing, phosphorylated on Ser-13 in mitosis. Phosphorylation of Ser-13 by CDK1 during mitosis reduces homotetramerization and catalytic efficiency when DNA replication is complete and intracellular TK1 is still present at a high level. Polyubiquitinated. Postmitosis, ubiquitination leads to proteasomal degradation. The KEN box sequence located at the C-terminal region targets for degradation by the anaphase promoting complex (APC/C) activated and rate-limited by FZR1.

The protein localises to the cytoplasm. The catalysed reaction is thymidine + ATP = dTMP + ADP + H(+). Its function is as follows. Cell-cycle-regulated enzyme of importance in nucleotide metabolism. Catalyzes the first enzymatic step in the salvage pathway converting thymidine into thymidine monophosphate. Transcriptional regulation limits expression to the S phase of the cell cycle and transient expression coincides with the oscillation in the intracellular dTTP concentration. Also important for the activation of anticancer and antiviral nucleoside analog prodrugs such as 1-b-d-arabinofuranosylcytosine (AraC) and 3c-azido-3c-deoxythymidine (AZT). The polypeptide is Thymidine kinase, cytosolic (Homo sapiens (Human)).